Consider the following 554-residue polypeptide: Gamma-aminobutyric acid receptor subunit alpha-4 (554 aa).

Positions 1–35 (MVSAKKVPAIALSAGVSFALLRFLCLAVCLNESPG) are cleaved as a signal peptide. Over 36–259 (QNQKEEKLCT…FHLRRKMGYF (224 aa)) the chain is Extracellular. A glycan (N-linked (GlcNAc...) asparagine) is linked at Asn47. Arg100 provides a ligand contact to 4-aminobutanoate. Residues Asn144 and Asn157 are each glycosylated (N-linked (GlcNAc...) asparagine). Residue Thr163 coordinates 4-aminobutanoate. Cys172 and Cys186 are disulfide-bonded. The helical transmembrane segment at 260–280 (MIQTYIPCIMTVILSQVSFWI) threads the bilayer. The Cytoplasmic portion of the chain corresponds to 281–284 (NKES). Residues 285-305 (VPARTVFGITTVLTMTTLSIS) traverse the membrane as a helical segment. Residues 306–318 (ARHSLPKVSYATA) are Extracellular-facing. Residues 319–341 (MDWFIAVCFAFVFSALIEFAAVN) traverse the membrane as a helical segment. At 342-517 (YFTNIQMEKA…PPPSGSGTSK (176 aa)) the chain is on the cytoplasmic side. Disordered regions lie at residues 350 to 381 (KAKR…QNTN), 397 to 435 (ESDV…SPNP), 452 to 471 (PSAS…ASVG), and 495 to 515 (ATGK…GSGT). Residues 410–422 (SSKSSTVVQESSK) show a composition bias toward low complexity. The span at 502 to 511 (TPPPSAPPPS) shows a compositional bias: pro residues. The helical transmembrane segment at 518–540 (IDKYARILFPVTFGAFNMVYWVV) threads the bilayer. Over 541 to 554 (YLSKDTMEKSESLM) the chain is Extracellular.

Belongs to the ligand-gated ion channel (TC 1.A.9) family. Gamma-aminobutyric acid receptor (TC 1.A.9.5) subfamily. GABRA4 sub-subfamily. In terms of assembly, heteropentamer, formed by a combination of alpha (GABRA1-6), beta (GABRB1-3), gamma (GABRG1-3), delta (GABRD), epsilon (GABRE), rho (GABRR1-3), pi (GABRP) and theta (GABRQ) chains, each subunit exhibiting distinct physiological and pharmacological properties. As to expression, expressed in the brain.

The protein resides in the cell membrane. Its subcellular location is the postsynaptic cell membrane. The enzyme catalyses chloride(in) = chloride(out). Potentiated by histamine. In terms of biological role, alpha subunit of the heteropentameric ligand-gated chloride channel gated by gamma-aminobutyric acid (GABA), a major inhibitory neurotransmitter in the brain. GABA-gated chloride channels, also named GABA(A) receptors (GABAAR), consist of five subunits arranged around a central pore and contain GABA active binding site(s) located at the alpha and beta subunit interface(s). When activated by GABA, GABAARs selectively allow the flow of chloride anions across the cell membrane down their electrochemical gradient. GABAARs containing alpha-4 are predominantly extrasynaptic, contributing to tonic inhibition in dentate granule cells and thalamic relay neurons. Extrasynaptic alpha-4-containing GABAARs control levels of excitability and network activity. GABAAR containing alpha-4-beta-3-delta subunits can simultaneously bind GABA and histamine where histamine binds at the interface of two neighboring beta subunits, which may be involved in the regulation of sleep and wakefulness. In Homo sapiens (Human), this protein is Gamma-aminobutyric acid receptor subunit alpha-4.